A 310-amino-acid chain; its full sequence is tRNA dimethylallyltransferase (310 aa).

Residue 9–16 (GPTAVGKT) coordinates ATP. 11–16 (TAVGKT) lines the substrate pocket. The interaction with substrate tRNA stretch occupies residues 34 to 37 (DSMQ).

Belongs to the IPP transferase family. As to quaternary structure, monomer. The cofactor is Mg(2+).

The enzyme catalyses adenosine(37) in tRNA + dimethylallyl diphosphate = N(6)-dimethylallyladenosine(37) in tRNA + diphosphate. Functionally, catalyzes the transfer of a dimethylallyl group onto the adenine at position 37 in tRNAs that read codons beginning with uridine, leading to the formation of N6-(dimethylallyl)adenosine (i(6)A). This Pediococcus pentosaceus (strain ATCC 25745 / CCUG 21536 / LMG 10740 / 183-1w) protein is tRNA dimethylallyltransferase.